Reading from the N-terminus, the 890-residue chain is Probable LRR receptor-like serine/threonine-protein kinase At1g51860 (890 aa).

Positions 1-23 (MKSLHWFLHLLIIAFTVLRSVEA) are cleaved as a signal peptide. Over 24–513 (QNQAGFISLD…KESKKVPMVA (490 aa)) the chain is Extracellular. Asn-49, Asn-96, Asn-142, Asn-181, Asn-256, Asn-285, Asn-289, Asn-295, Asn-312, Asn-332, Asn-340, Asn-402, and Asn-419 each carry an N-linked (GlcNAc...) asparagine glycan. LRR repeat units lie at residues 412 to 435 (RIIS…SKLT), 436 to 458 (LLTV…FAEM), and 460 to 481 (SLKL…PDSL). Residues Asn-465, Asn-473, and Asn-497 are each glycosylated (N-linked (GlcNAc...) asparagine). A helical transmembrane segment spans residues 514 to 534 (IAASVAGVFALLVILAIFFVI). Residues 535-890 (KRKNVKAHKS…STSDFAPGAR (356 aa)) lie on the Cytoplasmic side of the membrane. Thr-575 carries the post-translational modification Phosphothreonine. One can recognise a Protein kinase domain in the interval 584 to 856 (NNFERVLGKG…HVVMELNDCV (273 aa)). ATP contacts are provided by residues 590–598 (LGKGGFGTV) and Lys-611. Residue Tyr-656 is modified to Phosphotyrosine. The active-site Proton acceptor is the Asp-708. At Ser-742 the chain carries Phosphoserine. Phosphothreonine is present on residues Thr-743 and Thr-748. Tyr-756 is subject to Phosphotyrosine.

The protein belongs to the protein kinase superfamily. Ser/Thr protein kinase family.

The protein resides in the membrane. It catalyses the reaction L-seryl-[protein] + ATP = O-phospho-L-seryl-[protein] + ADP + H(+). It carries out the reaction L-threonyl-[protein] + ATP = O-phospho-L-threonyl-[protein] + ADP + H(+). In Arabidopsis thaliana (Mouse-ear cress), this protein is Probable LRR receptor-like serine/threonine-protein kinase At1g51860.